Consider the following 74-residue polypeptide: UPF0435 protein Bcer98_0391 (74 aa).

The protein belongs to the UPF0435 family.

This Bacillus cytotoxicus (strain DSM 22905 / CIP 110041 / 391-98 / NVH 391-98) protein is UPF0435 protein Bcer98_0391.